The chain runs to 371 residues: Protein STRICTOSIDINE SYNTHASE-LIKE 6 (371 aa).

A signal peptide spans 1 to 21 (MPVFLSSRFLFFCIIVPLLIS). 2 N-linked (GlcNAc...) asparagine glycosylation sites follow: Asn101 and Asn137. Phosphotyrosine is present on Tyr303.

This sequence belongs to the strictosidine synthase family.

The protein resides in the vacuole. The polypeptide is Protein STRICTOSIDINE SYNTHASE-LIKE 6 (Arabidopsis thaliana (Mouse-ear cress)).